We begin with the raw amino-acid sequence, 139 residues long: Translation initiation factor 2 subunit beta (139 aa).

This sequence belongs to the eIF-2-beta/eIF-5 family. As to quaternary structure, heterotrimer composed of an alpha, a beta and a gamma chain.

In terms of biological role, eIF-2 functions in the early steps of protein synthesis by forming a ternary complex with GTP and initiator tRNA. This chain is Translation initiation factor 2 subunit beta, found in Saccharolobus islandicus (strain Y.N.15.51 / Yellowstone #2) (Sulfolobus islandicus).